A 328-amino-acid chain; its full sequence is Ubiquitin-conjugating enzyme E2 Z (328 aa).

A UBC core domain is found at 71-225 (QCILRIKRDI…IRHETMRVAV (155 aa)). Cys160 (glycyl thioester intermediate) is an active-site residue. The segment at 295-328 (RLREKCPPEDNDGDSDSDTSSSGTDPDSQGSSQP) is disordered. Residues 312 to 328 (DTSSSGTDPDSQGSSQP) show a composition bias toward low complexity.

This sequence belongs to the ubiquitin-conjugating enzyme family.

The protein resides in the cytoplasm. The protein localises to the nucleus. It catalyses the reaction S-ubiquitinyl-[E1 ubiquitin-activating enzyme]-L-cysteine + [E2 ubiquitin-conjugating enzyme]-L-cysteine = [E1 ubiquitin-activating enzyme]-L-cysteine + S-ubiquitinyl-[E2 ubiquitin-conjugating enzyme]-L-cysteine.. Its pathway is protein modification; protein ubiquitination. Functionally, catalyzes the covalent attachment of ubiquitin to other proteins. May be involved in apoptosis regulation. The protein is Ubiquitin-conjugating enzyme E2 Z (ube2z) of Danio rerio (Zebrafish).